The primary structure comprises 248 residues: SEELSFSFTKFKTDQKNLILQRDALITPTGKLQLTTVENGKPAAYSLGRALYSTPIHIWDKSTGDEASFATFFSFVISDAPNPSTAATDGLAFFLAPADTQPQSAGGYLGLFEKDSSYNSSNQIVAVEFDTYYNSAWDPQTNPHIGIDVNTIKSKKVSSWGFKNGNVATVLITYQPSSKSLVASLVYPSGQTSDKTSYIISANVDLKATVPEWVRIGFSATTGQTDNYIETHDILSWSFKSKLPATKN.

N-linked (GlcNAc...) asparagine; partial glycosylation is present at Asn119. Residues Glu128 and Asp130 each coordinate Mn(2+). Ca(2+) is bound by residues Asp130, Tyr132, Asn134, and Asp138. Positions 138 and 144 each coordinate Mn(2+).

This sequence belongs to the leguminous lectin family.

The polypeptide is 2-acetamido-2-deoxy-D-galactose-binding seed lectin 2 (Cytisus scoparius (Scotch broom)).